The following is a 395-amino-acid chain: THAP domain-containing protein 5 (395 aa).

The THAP-type zinc finger occupies 1–84 (MPRYCAAICC…LKQTAVPTIF (84 aa)). A disordered region spans residues 85–112 (SLPEDNQGKDPSKKKSQKKNLEDEKEVC). The span at 90-112 (NQGKDPSKKKSQKKNLEDEKEVC) shows a compositional bias: basic and acidic residues. Positions 321–324 (EHSY) match the HCFC1-binding motif (HBM) motif. A coiled-coil region spans residues 348–382 (LELKEQQTLGRLKSLEALIRQLKQENWLSEENVKI).

As to quaternary structure, interacts with HTRA2; under apoptotic conditions. Interacts with ABRAXAS2. Post-translationally, cleaved by HTRA2 during apoptosis. Detected in heart. Detected in brain and muscle (at protein level). Highly expressed in the heart. Also found in brain and skeletal muscle.

Its subcellular location is the nucleus. In terms of biological role, has sequence-specific DNA-binding activity and can function as transcriptional repressor (in vitro). May be a regulator of cell cycle: THAP5 overexpression in human cell lines causes cell cycle arrest at G2/M phase. This chain is THAP domain-containing protein 5 (THAP5), found in Homo sapiens (Human).